The following is an 82-amino-acid chain: MSALGDVIYILGFLFPALGLISRNYLVNLMAFIIGTVAFLVFVQGYTDIAFSSSTFYLGVLPLLLGLVNLGYFFNWLREERI.

In terms of biological role, this protein may be involved in virus assembly. This is an uncharacterized protein from Sulfolobus spindle-shape virus 1 (SSV1).